We begin with the raw amino-acid sequence, 241 residues long: Uridylate kinase (241 aa).

Residues 10–13 (KLSG), Gly-53, and Arg-57 each bind ATP. Residues Asp-72 and 133–140 (AGSPYFST) contribute to the UMP site. Residues Asn-161, Tyr-167, and Asp-170 each contribute to the ATP site.

The protein belongs to the UMP kinase family. Homohexamer.

The protein resides in the cytoplasm. The enzyme catalyses UMP + ATP = UDP + ADP. Its pathway is pyrimidine metabolism; CTP biosynthesis via de novo pathway; UDP from UMP (UMPK route): step 1/1. Inhibited by UTP. Its function is as follows. Catalyzes the reversible phosphorylation of UMP to UDP. The protein is Uridylate kinase of Aster yellows witches'-broom phytoplasma (strain AYWB).